Consider the following 89-residue polypeptide: Large ribosomal subunit protein bL27 (89 aa).

This sequence belongs to the bacterial ribosomal protein bL27 family.

The sequence is that of Large ribosomal subunit protein bL27 from Bacteroides fragilis (strain ATCC 25285 / DSM 2151 / CCUG 4856 / JCM 11019 / LMG 10263 / NCTC 9343 / Onslow / VPI 2553 / EN-2).